Consider the following 334-residue polypeptide: Cytoskeleton protein RodZ (334 aa).

Topologically, residues 1-111 are cytoplasmic; that stretch reads MNTEATHDQN…LGKRRKKRDG (111 aa). The HTH cro/C1-type domain occupies 19–71; it reads LRNAREQLGLSQQAVAERLCLKVSTVRDIEEDKAPSDLASTFLRGYIRSYARL. A DNA-binding region (H-T-H motif) is located at residues 30-49; sequence QQAVAERLCLKVSTVRDIEE. A helical; Signal-anchor for type II membrane protein membrane pass occupies residues 112–132; the sequence is WLMSFTWLVLFVVVGLTGAWW. The Periplasmic portion of the chain corresponds to 133-334; it reads WQNHKAQQEE…TLNAEPTPAQ (202 aa). The segment at 155 to 241 is disordered; sequence NADKDSGQSV…PSALPTSQAG (87 aa). 2 stretches are compositionally biased toward low complexity: residues 170–211 and 219–241; these read AATS…TVVA and TAATSAAPAATETPSALPTSQAG.

The protein belongs to the RodZ family.

It is found in the cell inner membrane. Its function is as follows. Cytoskeletal protein that is involved in cell-shape control through regulation of the length of the long axis. The sequence is that of Cytoskeleton protein RodZ from Salmonella agona (strain SL483).